Consider the following 389-residue polypeptide: S-adenosylmethionine synthase (389 aa).

Residue His-15 participates in ATP binding. A Mg(2+)-binding site is contributed by Asp-17. Glu-43 contributes to the K(+) binding site. L-methionine contacts are provided by Glu-56 and Gln-99. A flexible loop region spans residues 99–109; that stretch reads QSPDIAQGVNE. Residues 166–168, 234–235, Asp-243, 249–250, Ala-266, and Lys-270 contribute to the ATP site; these read DAK, RF, and RK. Residue Asp-243 participates in L-methionine binding. Lys-274 lines the L-methionine pocket.

It belongs to the AdoMet synthase family. In terms of assembly, homotetramer; dimer of dimers. Mg(2+) serves as cofactor. K(+) is required as a cofactor.

It is found in the cytoplasm. It catalyses the reaction L-methionine + ATP + H2O = S-adenosyl-L-methionine + phosphate + diphosphate. The protein operates within amino-acid biosynthesis; S-adenosyl-L-methionine biosynthesis; S-adenosyl-L-methionine from L-methionine: step 1/1. Functionally, catalyzes the formation of S-adenosylmethionine (AdoMet) from methionine and ATP. The overall synthetic reaction is composed of two sequential steps, AdoMet formation and the subsequent tripolyphosphate hydrolysis which occurs prior to release of AdoMet from the enzyme. This is S-adenosylmethionine synthase from Neisseria meningitidis serogroup C / serotype 2a (strain ATCC 700532 / DSM 15464 / FAM18).